The primary structure comprises 406 residues: Oligouridylate-binding protein 1 (406 aa).

2 RRM domains span residues 49 to 123 (RSVY…WAYA) and 134 to 212 (YNIF…WAAK). Positions 231-250 (TSGTSDDGQEKVVNEDAPEN) are disordered. One can recognise an RRM 3 domain in the interval 255–329 (TTVYVGNLAP…KPVKCSWGSK (75 aa)).

Its subcellular location is the nucleus. Functionally, heterogeneous nuclear ribonucleoprotein (hnRNP)-like protein that acts as a component of the pre-mRNA processing machinery. Functions to facilitate the nuclear maturation of plant pre-mRNAs. Binds with high affinity to RNA molecules that contain AU-rich regions. May bind to the 3'-UTR and protects the mRNA against exonucleolytic degradation. Associates with nuclear poly(A)+ RNA in nucleus in vivo. Does not stimulate transcription or the 3' end cleavage/polyadenylation reaction. This Nicotiana plumbaginifolia (Leadwort-leaved tobacco) protein is Oligouridylate-binding protein 1 (UBP1).